The following is a 200-amino-acid chain: Glycerol-3-phosphate acyltransferase (200 aa).

5 consecutive transmembrane segments (helical) span residues 2 to 22 (FNIPAVAVSYLIGSLSFAVIV), 51 to 71 (KAAALTLLGDAAKGLVAVLLA), 84 to 104 (AIAAVALAALVGHMWPVFFGF), 114 to 134 (LGVLLALSPATALVCALIWLV), and 158 to 178 (LFFMPHTSWIFATLAIAILVL).

Belongs to the PlsY family. As to quaternary structure, probably interacts with PlsX.

Its subcellular location is the cell inner membrane. It catalyses the reaction an acyl phosphate + sn-glycerol 3-phosphate = a 1-acyl-sn-glycero-3-phosphate + phosphate. It participates in lipid metabolism; phospholipid metabolism. Catalyzes the transfer of an acyl group from acyl-phosphate (acyl-PO(4)) to glycerol-3-phosphate (G3P) to form lysophosphatidic acid (LPA). This enzyme utilizes acyl-phosphate as fatty acyl donor, but not acyl-CoA or acyl-ACP. The sequence is that of Glycerol-3-phosphate acyltransferase from Neisseria gonorrhoeae (strain ATCC 700825 / FA 1090).